The sequence spans 60 residues: Metallothionein (60 aa).

The beta stretch occupies residues 1-28 (MDPCECSKTGKCSCGGSCTCTNCSCTSC). A divalent metal cation is bound by residues Cys-4, Cys-6, Cys-12, Cys-14, Cys-18, Cys-20, Cys-23, Cys-25, Cys-28, Cys-32, Cys-33, Cys-35, Cys-36, Cys-40, Cys-43, Cys-47, Cys-49, Cys-54, Cys-58, and Cys-59. Residues 29-60 (KKSCCPCCPSGCSKCASGCVCKGKTCDTSCCQ) are alpha.

The protein belongs to the metallothionein superfamily. Type 1 family.

Functionally, metallothioneins have a high content of cysteine residues that bind various heavy metals. In Chelon auratus (Golden grey mullet), this protein is Metallothionein (mt).